The chain runs to 217 residues: Adenylate kinase (217 aa).

Gly-11–Thr-16 contributes to the ATP binding site. The interval Ser-31–Val-60 is NMP. Residues Thr-32, Arg-37, Asn-58 to Val-60, Gly-86 to Arg-89, and Gln-93 contribute to the AMP site. The segment at Ala-127–Asp-165 is LID. Arg-128 contributes to the ATP binding site. Residues Cys-131 and Cys-134 each coordinate Zn(2+). Residue Thr-137–Tyr-138 participates in ATP binding. Residues Cys-151 and Cys-154 each contribute to the Zn(2+) site. AMP contacts are provided by Arg-162 and Arg-173. Gln-201 is a binding site for ATP.

This sequence belongs to the adenylate kinase family. Monomer.

The protein resides in the cytoplasm. It carries out the reaction AMP + ATP = 2 ADP. Its pathway is purine metabolism; AMP biosynthesis via salvage pathway; AMP from ADP: step 1/1. In terms of biological role, catalyzes the reversible transfer of the terminal phosphate group between ATP and AMP. Plays an important role in cellular energy homeostasis and in adenine nucleotide metabolism. In Lactobacillus johnsonii (strain CNCM I-12250 / La1 / NCC 533), this protein is Adenylate kinase.